We begin with the raw amino-acid sequence, 215 residues long: Pyrrolidone-carboxylate peptidase (215 aa).

Catalysis depends on residues glutamate 81, cysteine 144, and histidine 168.

The protein belongs to the peptidase C15 family. In terms of assembly, homotetramer.

The protein resides in the cytoplasm. It carries out the reaction Release of an N-terminal pyroglutamyl group from a polypeptide, the second amino acid generally not being Pro.. Removes 5-oxoproline from various penultimate amino acid residues except L-proline. The polypeptide is Pyrrolidone-carboxylate peptidase (pcp) (Bacillus amyloliquefaciens (Bacillus velezensis)).